Consider the following 341-residue polypeptide: HTH-type transcriptional repressor PurR (341 aa).

One can recognise an HTH lacI-type domain in the interval 2 to 56 (ATIKDVAKRAGVSTTTVSHVINKTRFVAEETKAAVRAAIKELHYSPSAVARSLKV). Residues 4–23 (IKDVAKRAGVSTTTVSHVIN) constitute a DNA-binding region (H-T-H motif). The DNA-binding element occupies 48–56 (SAVARSLKV). 5 residues coordinate hypoxanthine: Tyr-73, Arg-190, Thr-192, Phe-221, and Asp-275.

As to quaternary structure, homodimer.

It participates in purine metabolism; purine nucleotide biosynthesis [regulation]. Is the main repressor of the genes involved in the de novo synthesis of purine nucleotides, regulating purB, purC, purEK, purF, purHD, purL, purMN and guaBA expression. PurR is allosterically activated to bind its cognate DNA by binding the purine corepressors, hypoxanthine or guanine, thereby effecting transcription repression. This Pectobacterium atrosepticum (strain SCRI 1043 / ATCC BAA-672) (Erwinia carotovora subsp. atroseptica) protein is HTH-type transcriptional repressor PurR.